The following is a 106-amino-acid chain: Toxin-like structure LSTX-D8 (106 aa).

An N-terminal signal peptide occupies residues 1-20 (MTKVLVVVALLVTLISYSSS). Residues 21–41 (EGIDDLEADELLSLMANEQTR) constitute a propeptide that is removed on maturation. Cystine bridges form between cysteine 45–cysteine 60, cysteine 52–cysteine 69, cysteine 59–cysteine 85, and cysteine 71–cysteine 83.

It belongs to the neurotoxin 19 (CSTX) family. 02 (D7) subfamily. In terms of tissue distribution, expressed by the venom gland.

It is found in the secreted. This chain is Toxin-like structure LSTX-D8, found in Lycosa singoriensis (Wolf spider).